We begin with the raw amino-acid sequence, 223 residues long: NADH-quinone oxidoreductase subunit C (223 aa).

Belongs to the complex I 30 kDa subunit family. As to quaternary structure, NDH-1 is composed of 14 different subunits. Subunits NuoB, C, D, E, F, and G constitute the peripheral sector of the complex.

It localises to the cell inner membrane. The enzyme catalyses a quinone + NADH + 5 H(+)(in) = a quinol + NAD(+) + 4 H(+)(out). In terms of biological role, NDH-1 shuttles electrons from NADH, via FMN and iron-sulfur (Fe-S) centers, to quinones in the respiratory chain. The immediate electron acceptor for the enzyme in this species is believed to be ubiquinone. Couples the redox reaction to proton translocation (for every two electrons transferred, four hydrogen ions are translocated across the cytoplasmic membrane), and thus conserves the redox energy in a proton gradient. This is NADH-quinone oxidoreductase subunit C from Hydrogenovibrio crunogenus (strain DSM 25203 / XCL-2) (Thiomicrospira crunogena).